We begin with the raw amino-acid sequence, 260 residues long: Snake venom serine protease homolog (260 aa).

Positions 1-18 (MVLVRVLANLLMLQLSYA) are cleaved as a signal peptide. The propeptide occupies 19 to 24 (QKSSEL). The 227-residue stretch at 25–251 (IIGGDECNIN…HLDWIKSIIA (227 aa)) folds into the Peptidase S1 domain. 6 disulfides stabilise this stretch: cysteine 31–cysteine 165, cysteine 52–cysteine 68, cysteine 100–cysteine 258, cysteine 144–cysteine 212, cysteine 176–cysteine 191, and cysteine 202–cysteine 227. Aspartate 112 functions as the Charge relay system in the catalytic mechanism. N-linked (GlcNAc...) asparagine glycosylation is found at asparagine 123 and asparagine 124. Catalysis depends on serine 206, which acts as the Charge relay system.

Belongs to the peptidase S1 family. Snake venom subfamily. In terms of tissue distribution, expressed by the venom gland.

It is found in the secreted. Snake venom serine protease homolog. May act in the hemostasis system of the prey. The polypeptide is Snake venom serine protease homolog (Protobothrops jerdonii (Jerdon's pitviper)).